An 861-amino-acid polypeptide reads, in one-letter code: Glucans biosynthesis glucosyltransferase H (861 aa).

6 consecutive transmembrane segments (helical) span residues 142–162, 188–208, 516–536, 573–593, 600–620, and 683–703; these read FILLLLMLAQTSVATYYMKGI, VLPYVIQFGILALFAILFCWV, VFLTGVMSYLSAPLWFFFLVL, LFSTTLTLLFLPKLLSVMLIW, FGGVIRVTLSMLLEMFFSVLL, and FLWWLSPIVGSLILSIPVSVI.

This sequence belongs to the glycosyltransferase 2 family. OpgH subfamily.

It is found in the cell inner membrane. The protein operates within glycan metabolism; osmoregulated periplasmic glucan (OPG) biosynthesis. Its function is as follows. Involved in the biosynthesis of osmoregulated periplasmic glucans (OPGs). The sequence is that of Glucans biosynthesis glucosyltransferase H from Pseudomonas aeruginosa (strain LESB58).